Here is a 90-residue protein sequence, read N- to C-terminus: MDNMSPRLRAFLSEPIGEKDVCWVDGISHELAINLVTKGINKAYILLGQFLLMHKNEAEFQRWLICCFGATECEAQQTSHCLKEWCACFL.

It belongs to the BAF family. In terms of assembly, homodimer. Heterodimerizes with BANF1. In terms of tissue distribution, expressed strongly in testis and pancreas. Also detected in brain, colon, liver, lung, ovary, placenta, prostate, small intestine, spleen and thymus. Not detected in heart, kidney and skeletal muscle.

The protein localises to the nucleus. The protein resides in the cytoplasm. Its function is as follows. May play a role in BANF1 regulation and influence tissue-specific roles of BANF1. The sequence is that of Barrier-to-autointegration factor-like protein (BANF2) from Homo sapiens (Human).